A 74-amino-acid polypeptide reads, in one-letter code: Kappa-stichotoxin-Sgt4a (74 aa).

The first 22 residues, 1–22, serve as a signal peptide directing secretion; the sequence is MKFQVIAAVLLIEFCLCVVVTA. Positions 23–39 are excised as a propeptide; sequence RMELQDVEDVENGFQKR. A ShKT domain is found at 42 to 74; sequence CIDTIPQSRCTAFQCKHSMKYRLSFCRKTCGTC. Cystine bridges form between Cys-42–Cys-74, Cys-51–Cys-67, and Cys-56–Cys-71.

It belongs to the sea anemone type 1 potassium channel toxin family. Type 1a subfamily.

It is found in the secreted. It localises to the nematocyst. Its function is as follows. Inhibits voltage-gated potassium channels (Kv) with higher potency for Kv1.1/KCNA1 and Kv1.3/KCNA3. This chain is Kappa-stichotoxin-Sgt4a, found in Stichodactyla gigantea (Giant carpet anemone).